We begin with the raw amino-acid sequence, 100 residues long: Aspartyl/glutamyl-tRNA(Asn/Gln) amidotransferase subunit C (100 aa).

It belongs to the GatC family. In terms of assembly, heterotrimer of A, B and C subunits.

The catalysed reaction is L-glutamyl-tRNA(Gln) + L-glutamine + ATP + H2O = L-glutaminyl-tRNA(Gln) + L-glutamate + ADP + phosphate + H(+). It catalyses the reaction L-aspartyl-tRNA(Asn) + L-glutamine + ATP + H2O = L-asparaginyl-tRNA(Asn) + L-glutamate + ADP + phosphate + 2 H(+). Functionally, allows the formation of correctly charged Asn-tRNA(Asn) or Gln-tRNA(Gln) through the transamidation of misacylated Asp-tRNA(Asn) or Glu-tRNA(Gln) in organisms which lack either or both of asparaginyl-tRNA or glutaminyl-tRNA synthetases. The reaction takes place in the presence of glutamine and ATP through an activated phospho-Asp-tRNA(Asn) or phospho-Glu-tRNA(Gln). This chain is Aspartyl/glutamyl-tRNA(Asn/Gln) amidotransferase subunit C, found in Dictyoglomus thermophilum (strain ATCC 35947 / DSM 3960 / H-6-12).